The sequence spans 253 residues: Tetraspanin-3 (253 aa).

Residues 1 to 11 lie on the Cytoplasmic side of the membrane; it reads MGQCGITSSKT. Residues 12-32 form a helical membrane-spanning segment; sequence VLVFLNLIFWGAAGILCYVGA. The Extracellular portion of the chain corresponds to 33–50; sequence YVFITYDDYDHFFEDVYT. Residues 51-71 form a helical membrane-spanning segment; the sequence is LIPAVVIIAVGALLFIIGLIG. At 72 to 85 the chain is on the cytoplasmic side; sequence CCATIRESRCGLAT. Residues 86–106 form a helical membrane-spanning segment; that stretch reads FVIILLLVFVTEVVVVVLGYV. The Extracellular segment spans residues 107-212; it reads YRAKVENEVD…KKLQEIMMHV (106 aa). Residues N127, N152, N167, and N183 are each glycosylated (N-linked (GlcNAc...) asparagine). The chain crosses the membrane as a helical span at residues 213-233; it reads IWAALAFAAIQLLGMLCACIV. Topologically, residues 234–253 are cytoplasmic; it reads LCRRSRDPAYELLITGGAYA.

Belongs to the tetraspanin (TM4SF) family. Interacts with claudin-11/CLDN11 and integrins.

It localises to the membrane. Its function is as follows. Regulates the proliferation and migration of oligodendrocytes, a process essential for normal myelination and repair. The protein is Tetraspanin-3 (TSPAN3) of Bos taurus (Bovine).